The primary structure comprises 181 residues: ATP synthase subunit b (181 aa).

Residues 23 to 43 (FIHIPTFIYTALNLVILYFIL) form a helical membrane-spanning segment.

It belongs to the ATPase B chain family. As to quaternary structure, F-type ATPases have 2 components, F(1) - the catalytic core - and F(0) - the membrane proton channel. F(1) has five subunits: alpha(3), beta(3), gamma(1), delta(1), epsilon(1). F(0) has three main subunits: a(1), b(2) and c(10-14). The alpha and beta chains form an alternating ring which encloses part of the gamma chain. F(1) is attached to F(0) by a central stalk formed by the gamma and epsilon chains, while a peripheral stalk is formed by the delta and b chains.

The protein resides in the cell membrane. Functionally, f(1)F(0) ATP synthase produces ATP from ADP in the presence of a proton or sodium gradient. F-type ATPases consist of two structural domains, F(1) containing the extramembraneous catalytic core and F(0) containing the membrane proton channel, linked together by a central stalk and a peripheral stalk. During catalysis, ATP synthesis in the catalytic domain of F(1) is coupled via a rotary mechanism of the central stalk subunits to proton translocation. Its function is as follows. Component of the F(0) channel, it forms part of the peripheral stalk, linking F(1) to F(0). The sequence is that of ATP synthase subunit b from Acetivibrio thermocellus (strain ATCC 27405 / DSM 1237 / JCM 9322 / NBRC 103400 / NCIMB 10682 / NRRL B-4536 / VPI 7372) (Clostridium thermocellum).